We begin with the raw amino-acid sequence, 611 residues long: Probable methyltransferase PMT1 (611 aa).

At 1-11 the chain is on the cytoplasmic side; the sequence is MRGRSEGGKKK. Residues 12-32 traverse the membrane as a helical; Signal-anchor for type II membrane protein segment; the sequence is PVIVLLCVASVVLVFVYLFFG. Over 33 to 611 the chain is Lumenal; that stretch reads SSNHKAIEYG…LTSESLRDLE (579 aa). An N-linked (GlcNAc...) asparagine glycan is attached at N345.

It belongs to the methyltransferase superfamily.

The protein localises to the golgi apparatus membrane. This Arabidopsis thaliana (Mouse-ear cress) protein is Probable methyltransferase PMT1.